A 479-amino-acid polypeptide reads, in one-letter code: Nuclear receptor subfamily 6 group A member 1 (479 aa).

The interval 1 to 32 (MERDERPPSGGGGGGGSAGFLEPPAALPPPPR) is disordered. Positions 9-18 (SGGGGGGGSA) are enriched in gly residues. The nuclear receptor DNA-binding region spans 57–132 (QRTCLICGDR…MGMNRKAIRE (76 aa)). Positions 60, 63, 77, 80, 96, 102, 112, and 115 each coordinate Zn(2+). 2 consecutive NR C4-type zinc fingers follow at residues 60-80 (CLIC…CEGC) and 96-120 (CSRD…LLKC). Disordered regions lie at residues 131–150 (REDG…QISE) and 162–198 (FEEE…TLSS). Residues 165 to 177 (EANHWSNHGDSDH) show a composition bias toward basic and acidic residues. A sufficient for interaction with UIMC1 region spans residues 172-252 (HGDSDHSSPG…RSLDPQSYSL (81 aa)). The segment covering 178 to 198 (SSPGNRASESNQPSPGSTLSS) has biased composition (polar residues). Residues 248 to 479 (QSYSLIHQLV…HSCKTSVGKE (232 aa)) enclose the NR LBD domain.

It belongs to the nuclear hormone receptor family. NR6 subfamily. As to quaternary structure, homodimer. Interacts with UIMC1.

It localises to the nucleus. Its function is as follows. Orphan nuclear receptor that binds to a response element containing the sequence 5'-TCAAGGTCA-3'. Acts as a regulator of embryonic stem cell pluripotency by mediating repression of POU5F1/OCT4: binds to the DR0 element within the POU5F1/OCT4 promoter and inhibits POU5F1/OCT4 expression during embryonic stem cell differentiation. Involved in the regulation of gene expression in germ cell development during gametogenesis. The protein is Nuclear receptor subfamily 6 group A member 1 (NR6A1) of Sus scrofa (Pig).